The following is a 947-amino-acid chain: DNA polymerase (947 aa).

Belongs to the DNA polymerase type-B family.

It catalyses the reaction DNA(n) + a 2'-deoxyribonucleoside 5'-triphosphate = DNA(n+1) + diphosphate. This chain is DNA polymerase, found in Red sea bream iridovirus (RSIV).